A 314-amino-acid polypeptide reads, in one-letter code: Deoxyhypusine hydroxylase (314 aa).

Methionine 1 is modified (N-acetylmethionine). HEAT-like PBS-type repeat units follow at residues 61–87 (LAHE…VLND), 94–120 (VRHE…SLSS), 188–214 (ERYA…SLSA), 219–245 (LRHE…VLRD), and 252–278 (VRHE…FSKD). Fe cation-binding residues include histidine 63, glutamate 64, histidine 96, and glutamate 97. Histidine 221, glutamate 222, histidine 254, and glutamate 255 together coordinate Fe cation.

This sequence belongs to the deoxyhypusine hydroxylase family. Fe(2+) serves as cofactor.

It carries out the reaction [eIF5A protein]-deoxyhypusine + AH2 + O2 = [eIF5A protein]-hypusine + A + H2O. The protein operates within protein modification; eIF5A hypusination. Its function is as follows. Catalyzes the hydroxylation of the N(6)-(4-aminobutyl)-L-lysine intermediate to form hypusine, an essential post-translational modification only found in mature eIF-5A factor. The protein is Deoxyhypusine hydroxylase of Arabidopsis thaliana (Mouse-ear cress).